Here is a 100-residue protein sequence, read N- to C-terminus: Large ribosomal subunit protein eL30 (100 aa).

Belongs to the eukaryotic ribosomal protein eL30 family.

In Thermococcus sibiricus (strain DSM 12597 / MM 739), this protein is Large ribosomal subunit protein eL30.